The primary structure comprises 277 residues: S-formylglutathione hydrolase FrmB (277 aa).

Catalysis depends on charge relay system residues S145, D221, and H254.

This sequence belongs to the esterase D family.

It carries out the reaction S-formylglutathione + H2O = formate + glutathione + H(+). Functionally, serine hydrolase involved in the detoxification of formaldehyde. Hydrolyzes S-formylglutathione to glutathione and formate. The polypeptide is S-formylglutathione hydrolase FrmB (frmB) (Escherichia coli O9:H4 (strain HS)).